The chain runs to 564 residues: Histone acetyltransferase rtt109 (564 aa).

Acetyl-CoA contacts are provided by residues Phe138, 157 to 159 (HVL), and Trp167. Asp261 acts as the Proton donor/acceptor in catalysis. An N6-acetyllysine; by autocatalysis modification is found at Lys263. 2 disordered regions span residues 355–420 (YDKV…NAFY) and 506–549 (RKKD…ESPG). The segment covering 366–377 (AVSVSTDSQSSD) has biased composition (low complexity). Polar residues-rich tracts occupy residues 394 to 417 (DPSTQTGSLSSETHPKVQPNTDQN) and 512 to 521 (SQATTATSAQ). A compositionally biased stretch (low complexity) spans 529–544 (GTVSTAVTAEASTTGT).

This sequence belongs to the RTT109 family.

It is found in the nucleus. Its subcellular location is the vacuole. The catalysed reaction is L-lysyl-[protein] + acetyl-CoA = N(6)-acetyl-L-lysyl-[protein] + CoA + H(+). It carries out the reaction L-lysyl-[histone] + acetyl-CoA = N(6)-acetyl-L-lysyl-[histone] + CoA + H(+). Functionally, histone chaperone-dependent acetylase that modifies 'Lys-56' of histone H3 (H3K56ac). Histone H3 'Lys-56' acetylation may be required for S-phase-linked DNA damage tolerance. Also acetylates 'Lys-9' of histone H3 (H3K9ac). Autoacetylates. This chain is Histone acetyltransferase rtt109, found in Aspergillus flavus.